Reading from the N-terminus, the 1640-residue chain is Basal body protein 10 (1640 aa).

A homodimerization region spans residues 11–64 (VLRRKLEALGYSDPLEPASLQLVQKLVEDLVHTTDSYTAVKQQCAKQAQEIAAF). Residues 93-148 (AERHEREAREHYTAVKRLEDTIAELSYWKHAAAEKLASADKENAGLRKRCEELAKL) adopt a coiled-coil conformation. A disordered region spans residues 154–185 (SGAATPQSVAPKISSRSPIRVAPPPSPPRPRQ). Over residues 174-183 (VAPPPSPPRP) the composition is skewed to pro residues. 10 coiled-coil regions span residues 191–232 (LQAA…RDVE), 260–332 (ILQL…LQDT), 370–411 (VERL…AQSR), 461–722 (FAAL…AEAD), 758–960 (ARQM…AQAA), 1010–1030 (GEALREELRAVSEDLEALVRE), 1059–1086 (RASAEQLLRAKEAEAEDLRRVYEALAAE), 1129–1282 (INQY…LQAS), 1323–1494 (AKDQ…AERD), and 1523–1557 (AELASRRLRELQTQVDALEAEKAGLEEATQRTRAT). Low complexity predominate over residues 1592 to 1618 (GQGQVQGPAGTAPAAAAGAPGPQPGQA). The segment at 1592-1640 (GQGQVQGPAGTAPAAAAGAPGPQPGQAQAGGFGGAHGGGSISLSGGPRR) is disordered. A compositionally biased stretch (gly residues) spans 1619-1631 (QAGGFGGAHGGGS).

This sequence belongs to the CEP135/TSGA10 family. Homodimer.

The protein localises to the cytoplasm. Its subcellular location is the cytoskeleton. It is found in the microtubule organizing center. It localises to the centrosome. The protein resides in the centriole. Its function is as follows. Microtubule-binding protein essential for cytoskeletal organization (e.g. rootlet microtubule bundles) and flagellar basal body/centriole assembly. This chain is Basal body protein 10, found in Chlamydomonas reinhardtii (Chlamydomonas smithii).